A 425-amino-acid chain; its full sequence is Nucleoporin nup45 (425 aa).

Polar residues predominate over residues 1 to 10; that stretch reads MFGLNKTPSF. Positions 1–207 are disordered; it reads MFGLNKTPSF…GFGLSNNTQT (207 aa). Low complexity predominate over residues 11-27; the sequence is GSTGTQNQNTGTSAGTG. Residues 28–45 are compositionally biased toward polar residues; sequence LFSSNTFGNNTQANTPAS. Positions 47–56 are enriched in gly residues; sequence GFGGVTGGAF. Polar residues predominate over residues 72-89; that stretch reads PNATSTTPGLNLFGQNPQ. Composition is skewed to low complexity over residues 112 to 126 and 135 to 150; these read NQNQ…AAPT and QNQT…ANTS. The span at 167–207 shows a compositional bias: polar residues; it reads NRPNTSTFGQFSTQPASAGLFGQSTQPSGSTGFGLSNNTQT. Phosphoserine occurs at positions 289 and 290.

It localises to the cytoplasm. The protein localises to the nucleus. The protein resides in the nuclear pore complex. Functions as a component of the nuclear pore complex (NPC). NPC components, collectively referred to as nucleoporins (NUPs), can play the role of both NPC structural components and of docking or interaction partners for transiently associated nuclear transport factors. Active directional transport is assured by both, a Phe-Gly (FG) repeat affinity gradient for these transport factors across the NPC and a transport cofactor concentration gradient across the nuclear envelope. This Schizosaccharomyces pombe (strain 972 / ATCC 24843) (Fission yeast) protein is Nucleoporin nup45 (nup45).